The chain runs to 638 residues: Chaperone protein HtpG (638 aa).

The tract at residues 1–344 (MQKKETLEFQ…SNDLPLNVSR (344 aa)) is a; substrate-binding. The b stretch occupies residues 345 to 560 (EILQNNENIY…ENDITTQMSK (216 aa)). The segment at 561-638 (LLISTGQESP…LLLSNIIRLN (78 aa)) is c.

This sequence belongs to the heat shock protein 90 family. Homodimer.

Its subcellular location is the cytoplasm. Its function is as follows. Molecular chaperone. Has ATPase activity. The sequence is that of Chaperone protein HtpG from Wigglesworthia glossinidia brevipalpis.